We begin with the raw amino-acid sequence, 356 residues long: Tyrosine recombinase XerS (356 aa).

A Core-binding (CB) domain is found at 16-121; it reads IMPWYVLEYY…ALSSLYKYLT (106 aa). A Tyr recombinase domain is found at 169-354; the sequence is GFLTYIDQEY…VNDEQKNALD (186 aa). Catalysis depends on residues R210, K234, H306, R309, and H332. Residue Y341 is the O-(3'-phospho-DNA)-tyrosine intermediate of the active site.

This sequence belongs to the 'phage' integrase family. XerS subfamily.

Its subcellular location is the cytoplasm. FtsK is required for recombination. Functionally, site-specific tyrosine recombinase, which acts by catalyzing the cutting and rejoining of the recombining DNA molecules. Essential to convert dimers of the bacterial chromosome into monomers to permit their segregation at cell division. The protein is Tyrosine recombinase XerS of Streptococcus pneumoniae (strain Hungary19A-6).